The primary structure comprises 614 residues: Probable ATP-dependent RNA helicase DDX5 (614 aa).

Basic and acidic residues predominate over residues 1 to 15 (MSGYSSDRDRGRDRG). The segment at 1 to 39 (MSGYSSDRDRGRDRGFGAPRFGGSRAGPLSGKKFGNPGE) is disordered. Position 24 is a phosphoserine (S24). K32 is modified (N6-acetyllysine; alternate). K32 is covalently cross-linked (Glycyl lysine isopeptide (Lys-Gly) (interchain with G-Cter in SUMO2); alternate). N6-acetyllysine is present on residues K33 and K40. A Glycyl lysine isopeptide (Lys-Gly) (interchain with G-Cter in SUMO2) cross-link involves residue K45. K53 is covalently cross-linked (Glycyl lysine isopeptide (Lys-Gly) (interchain with G-Cter in SUMO2); alternate). K53 is covalently cross-linked (Glycyl lysine isopeptide (Lys-Gly) (interchain with G-Cter in SUMO); alternate). K53 is covalently cross-linked (Glycyl lysine isopeptide (Lys-Gly) (interchain with G-Cter in SUMO1); alternate). Positions 94–122 (LNFYEANFPANVMDVIARQNFTEPTAIQA) match the Q motif motif. ATP is bound by residues 114–116 (FTE), Q121, and 138–145 (AQTGSGKT). One can recognise a Helicase ATP-binding domain in the interval 125–300 (WPVALSGLDM…EDFLKDYIHI (176 aa)). An N6-acetyllysine modification is found at K236. The DEAD box signature appears at 248–251 (DEAD). Phosphotyrosine is present on Y297. Residues 328–475 (KLIRLMEEIM…AINPKLLQLV (148 aa)) form the Helicase C-terminal domain. Glycyl lysine isopeptide (Lys-Gly) (interchain with G-Cter in SUMO2) cross-links involve residues K340, K343, K388, K391, K411, K437, K451, and K470. The disordered stretch occupies residues 477–504 (DRGSGRSRGRGGMKDDRRDRYSAGKRGG). The tract at residues 477–614 (DRGSGRSRGR…GYPMPTGYSQ (138 aa)) is transactivation domain. A Phosphoserine modification is found at S480. Positions 488–498 (GMKDDRRDRYS) are enriched in basic and acidic residues. S520 is modified (phosphoserine). K523 is covalently cross-linked (Glycyl lysine isopeptide (Lys-Gly) (interchain with G-Cter in SUMO2)).

Belongs to the DEAD box helicase family. DDX5/DBP2 subfamily. Identified in the spliceosome C complex. Component of a ribonucleoprotein complex containing mRNAs and RNA-binding proteins including DDX5, HNRNPH2 and SRSF1 as well as splicing regulator ARVCF. Interacts with RBM4; the interaction occurs in an RNA-independent manner. Interacts with AGO1 and AGO2. Interacts with ESR1, AR, EP300, CREBBP, POLR2A, TP53, RUNX2 and HDAC1. Self-associates. Interacts with DDX17. Interacts with BRDT. The large PER complex involved in the repression of transcriptional termination is composed of at least PER2, CDK9, DDX5, DHX9, NCBP1 and POLR2A (active). Interacts with DHX36; this interaction occurs in a RNA-dependent manner. Interacts with NUPR1. Interacts with ERCC6. Interacts with DDX3X in the cytoplasm; this interaction may be more efficient when both proteins are unphosphorylated. Arg-502 is dimethylated, probably to asymmetric dimethylarginine. Post-translationally, sumoylated; sumoylation, promoted by PIAS1, promotes interaction with HDAC1 and transcriptional repression activity. Sumoylation also significantly increases stability, and reduces polyubiquitination. In terms of processing, polyubiquitinated, leading to proteasomal degradation. Weakly phosphorylated in the G1/S phase of the cell cycle and much more at G2/M, especially at Thr and Tyr residues.

Its subcellular location is the nucleus. It localises to the nucleolus. The protein resides in the nucleus speckle. It is found in the cytoplasm. The enzyme catalyses ATP + H2O = ADP + phosphate + H(+). Its function is as follows. Involved in the alternative regulation of pre-mRNA splicing; its RNA helicase activity is necessary for increasing tau exon 10 inclusion and occurs in a RBM4-dependent manner. Binds to the tau pre-mRNA in the stem-loop region downstream of exon 10. The rate of ATP hydrolysis is highly stimulated by single-stranded RNA. Involved in transcriptional regulation; the function is independent of the RNA helicase activity. Transcriptional coactivator for androgen receptor AR but probably not ESR1. Synergizes with DDX17 and SRA1 RNA to activate MYOD1 transcriptional activity and involved in skeletal muscle differentiation. Transcriptional coactivator for p53/TP53 and involved in p53/TP53 transcriptional response to DNA damage and p53/TP53-dependent apoptosis. Transcriptional coactivator for RUNX2 and involved in regulation of osteoblast differentiation. Acts as a transcriptional repressor in a promoter-specific manner; the function probably involves association with histone deacetylases, such as HDAC1. As component of a large PER complex is involved in the inhibition of 3' transcriptional termination of circadian target genes such as PER1 and NR1D1 and the control of the circadian rhythms. The polypeptide is Probable ATP-dependent RNA helicase DDX5 (DDX5) (Homo sapiens (Human)).